Reading from the N-terminus, the 93-residue chain is Protein YzgL (93 aa).

The chain is Protein YzgL (yzgL) from Escherichia coli (strain K12).